Consider the following 235-residue polypeptide: Probable transcriptional regulatory protein CJJ81176_1187 (235 aa).

It belongs to the TACO1 family.

The protein resides in the cytoplasm. The protein is Probable transcriptional regulatory protein CJJ81176_1187 of Campylobacter jejuni subsp. jejuni serotype O:23/36 (strain 81-176).